Here is a 475-residue protein sequence, read N- to C-terminus: MVRLWCGKLRLWKPYLALATQSRNSWFCSGGGAPSHHLHILKKYGSSEITEMINRYKRNVAGHTLTQNSMVGQYKTTVSPSVAQNVTIETFDSLCIQGNWREAVEVLDYLENKGYAMDLIRLLGLAKLCGKPEALEAARVVHECIIALVSPCDVGARNAIIEMYSGCCSVDDALKVFEEMPEWNSGTLCVMMRCFVNNGYGEEAIDLFTRFKEEGNKPNGEIFNQVFSTCTLTGDVKEGSLQFQAMYREYGIVPSMEHYHSVTKMLATSGHLDEALNFVERMPMEPSVDVWETLMNLSRVHGDVELGDRCAELVEKLDATRLDKVSSAGLVATKASDFVKKEPSTRSEPYFYSTFRPVDSSHPQMNIIYETLMSLRSQLKEMGYVPDTRYYRSLIMAMENKEQIFGYREEIAVVESLLKSKPRSAITLLTNIRIVGDCHDMMKLMSVITGRDMIKRDAKIYHLFKNGVCRCNNLW.

A mitochondrion-targeting transit peptide spans 1–37; sequence MVRLWCGKLRLWKPYLALATQSRNSWFCSGGGAPSHH. PPR repeat units lie at residues 83-117, 118-148, 153-183, 184-218, 219-254, and 255-285; these read AQNV…GYAM, DLIR…IIAL, DVGA…MPEW, NSGT…GNKP, NGEI…GIVP, and SMEH…MPME. The segment at 350–380 is type E(+) motif; the sequence is YFYSTFRPVDSSHPQMNIIYETLMSLRSQLK. Positions 381–475 are type DYW motif; it reads EMGYVPDTRY…NGVCRCNNLW (95 aa).

This sequence belongs to the PPR family. PCMP-H subfamily.

It is found in the mitochondrion. In Arabidopsis thaliana (Mouse-ear cress), this protein is Pentatricopeptide repeat-containing protein At1g29710, mitochondrial (PCMP-H67).